Here is a 197-residue protein sequence, read N- to C-terminus: dTTP/UTP pyrophosphatase (197 aa).

The active-site Proton acceptor is aspartate 69.

This sequence belongs to the Maf family. YhdE subfamily. A divalent metal cation is required as a cofactor.

It localises to the cytoplasm. The catalysed reaction is dTTP + H2O = dTMP + diphosphate + H(+). It catalyses the reaction UTP + H2O = UMP + diphosphate + H(+). Its function is as follows. Nucleoside triphosphate pyrophosphatase that hydrolyzes dTTP and UTP. May have a dual role in cell division arrest and in preventing the incorporation of modified nucleotides into cellular nucleic acids. In Lachnoclostridium phytofermentans (strain ATCC 700394 / DSM 18823 / ISDg) (Clostridium phytofermentans), this protein is dTTP/UTP pyrophosphatase.